A 133-amino-acid polypeptide reads, in one-letter code: Large-conductance mechanosensitive channel (133 aa).

Transmembrane regions (helical) follow at residues 14-34 and 73-93; these read VVDLAVAVVIGAAFGTVVTTL and FITVLLNFVIIAAAIYFMVVV.

It belongs to the MscL family. As to quaternary structure, homopentamer.

It localises to the cell membrane. In terms of biological role, channel that opens in response to stretch forces in the membrane lipid bilayer. May participate in the regulation of osmotic pressure changes within the cell. The polypeptide is Large-conductance mechanosensitive channel (Renibacterium salmoninarum (strain ATCC 33209 / DSM 20767 / JCM 11484 / NBRC 15589 / NCIMB 2235)).